The chain runs to 67 residues: Large ribosomal subunit protein bL35 (67 aa).

This sequence belongs to the bacterial ribosomal protein bL35 family.

This Rhizobium etli (strain CIAT 652) protein is Large ribosomal subunit protein bL35.